The chain runs to 461 residues: GTPase Der (461 aa).

EngA-type G domains follow at residues 9–171 and 200–371; these read KTIA…NLNK and IQVG…ECFS. GTP is bound by residues 15–22, 62–66, 123–126, 206–213, 253–257, and 317–320; these read GQPNVGKS, DTGGM, NKID, GRVNVGKS, DTAGI, and NKWD. A KH-like domain is found at 372–456; sequence KRIPTSLLNS…PLILNAKDKK (85 aa).

The protein belongs to the TRAFAC class TrmE-Era-EngA-EngB-Septin-like GTPase superfamily. EngA (Der) GTPase family. As to quaternary structure, associates with the 50S ribosomal subunit.

In terms of biological role, GTPase that plays an essential role in the late steps of ribosome biogenesis. The polypeptide is GTPase Der (Helicobacter pylori (strain HPAG1)).